The sequence spans 210 residues: Large ribosomal subunit protein uL3 (210 aa).

This sequence belongs to the universal ribosomal protein uL3 family. Part of the 50S ribosomal subunit. Forms a cluster with proteins L14 and L19.

In terms of biological role, one of the primary rRNA binding proteins, it binds directly near the 3'-end of the 23S rRNA, where it nucleates assembly of the 50S subunit. The polypeptide is Large ribosomal subunit protein uL3 (Pediococcus pentosaceus (strain ATCC 25745 / CCUG 21536 / LMG 10740 / 183-1w)).